The primary structure comprises 116 residues: MALKIRLRQQGRKNHVVYRLVLADVESPRDGKYIELLGWYDPHSEQNYQLKSERIFYWLNQGAELTEKAGALVKQGAPGVYAELMAKKNARRAVVRQKRRAYRQRLAARRAEAAAK.

This sequence belongs to the bacterial ribosomal protein bS16 family.

The protein is Small ribosomal subunit protein bS16 of Chlamydia muridarum (strain MoPn / Nigg).